Reading from the N-terminus, the 319-residue chain is Alpha-hemolysin (319 aa).

The N-terminal stretch at 1–26 (MKTRIVSSVTTTLLLGSILMNPVANA) is a signal peptide.

It belongs to the aerolysin family. Self-assembles to form first a non-lytic oligomeric intermediate and then, a mushroom-shaped homoheptamer structure of 100 Angstroms in length and up to 100 Angstroms in diameter.

The protein resides in the secreted. In terms of biological role, alpha-toxin binds to the membrane of eukaryotic cells resulting in the release of low-molecular weight molecules and leading to an eventual osmotic lysis. Inhibits host neutrophil chemotaxis to the lesion region. Heptamer oligomerization and pore formation is required for lytic activity. This is Alpha-hemolysin (hly) from Staphylococcus aureus (strain NCTC 8325 / PS 47).